We begin with the raw amino-acid sequence, 194 residues long: ATP synthase subunit delta (194 aa).

The protein belongs to the ATPase delta chain family. F-type ATPases have 2 components, F(1) - the catalytic core - and F(0) - the membrane proton channel. F(1) has five subunits: alpha(3), beta(3), gamma(1), delta(1), epsilon(1). F(0) has three main subunits: a(1), b(2) and c(10-14). The alpha and beta chains form an alternating ring which encloses part of the gamma chain. F(1) is attached to F(0) by a central stalk formed by the gamma and epsilon chains, while a peripheral stalk is formed by the delta and b chains.

It is found in the cell inner membrane. F(1)F(0) ATP synthase produces ATP from ADP in the presence of a proton or sodium gradient. F-type ATPases consist of two structural domains, F(1) containing the extramembraneous catalytic core and F(0) containing the membrane proton channel, linked together by a central stalk and a peripheral stalk. During catalysis, ATP synthesis in the catalytic domain of F(1) is coupled via a rotary mechanism of the central stalk subunits to proton translocation. Its function is as follows. This protein is part of the stalk that links CF(0) to CF(1). It either transmits conformational changes from CF(0) to CF(1) or is implicated in proton conduction. The protein is ATP synthase subunit delta of Bartonella quintana (strain Toulouse) (Rochalimaea quintana).